A 234-amino-acid polypeptide reads, in one-letter code: UPF0173 metal-dependent hydrolase Atu1317 (234 aa).

The protein belongs to the UPF0173 family.

This chain is UPF0173 metal-dependent hydrolase Atu1317, found in Agrobacterium fabrum (strain C58 / ATCC 33970) (Agrobacterium tumefaciens (strain C58)).